The sequence spans 588 residues: Actin-histidine N-methyltransferase (588 aa).

Positions 1-25 are disordered; that stretch reads MGKKSRVKTQKSGTGATASVSPKET. A compositionally biased stretch (polar residues) spans 10–25; sequence QKSGTGATASVSPKET. S-adenosyl-L-methionine-binding positions include Arg-75, 104–106, Arg-254, 275–279, and 325–327; these read EGF, DMCNH, and SGF. The SET domain maps to 94–314; that stretch reads EGFEMVNFKE…AGEQIYIFYG (221 aa). The segment at 546–588 is disordered; that stretch reads VNGENSIPNGTRSGKENFNQEGSERATEGTKESSSDSTAGARE. Residues 548–566 are compositionally biased toward polar residues; it reads GENSIPNGTRSGKENFNQE. The segment covering 567 to 579 has biased composition (basic and acidic residues); sequence GSERATEGTKESS.

It belongs to the class V-like SAM-binding methyltransferase superfamily. SETD3 actin-histidine methyltransferase family. In terms of assembly, interacts with MYOD1. Post-translationally, phosphorylated by GSK3B, which is required for recognition by the SCF(FBXW7) complex and subsequent degradation. In terms of processing, ubiquitinated by the SCF(FBXW7) complex following phosphorylation by GSK3B, leading to its degradation by the proteasome.

It localises to the cytoplasm. Its subcellular location is the nucleus. It catalyses the reaction L-histidyl-[protein] + S-adenosyl-L-methionine = N(tele)-methyl-L-histidyl-[protein] + S-adenosyl-L-homocysteine + H(+). Functionally, protein-histidine N-methyltransferase that specifically mediates 3-methylhistidine (tele-methylhistidine) methylation of actin at 'His-73'. Histidine methylation of actin is required for smooth muscle contraction of the laboring uterus during delivery. Does not have protein-lysine N-methyltransferase activity and probably only catalyzes histidine methylation of actin. This is Actin-histidine N-methyltransferase from Canis lupus familiaris (Dog).